The sequence spans 131 residues: Small ribosomal subunit protein uS8c (131 aa).

It belongs to the universal ribosomal protein uS8 family. Part of the 30S ribosomal subunit.

It localises to the plastid. It is found in the chloroplast. In terms of biological role, one of the primary rRNA binding proteins, it binds directly to 16S rRNA central domain where it helps coordinate assembly of the platform of the 30S subunit. This Phalaenopsis aphrodite subsp. formosana (Moth orchid) protein is Small ribosomal subunit protein uS8c (rps8).